A 283-amino-acid polypeptide reads, in one-letter code: Release factor glutamine methyltransferase (283 aa).

S-adenosyl-L-methionine-binding positions include 121-125 (GTGSG), Asp-144, and Asn-188. 188–191 (NPPY) provides a ligand contact to substrate.

Belongs to the protein N5-glutamine methyltransferase family. PrmC subfamily.

It catalyses the reaction L-glutaminyl-[peptide chain release factor] + S-adenosyl-L-methionine = N(5)-methyl-L-glutaminyl-[peptide chain release factor] + S-adenosyl-L-homocysteine + H(+). Its function is as follows. Methylates the class 1 translation termination release factors RF1/PrfA and RF2/PrfB on the glutamine residue of the universally conserved GGQ motif. This chain is Release factor glutamine methyltransferase, found in Bacillus anthracis.